Here is a 430-residue protein sequence, read N- to C-terminus: Sulfide-quinone reductase (430 aa).

FAD contacts are provided by residues 9–13 (GGGVG), 34–36 (SDR), 42–43 (TP), and T105. C156 functions as the Cysteine persulfide intermediate in the catalytic mechanism. 2 cysteine pairs are disulfide-bonded: C280–C422 and C419–C430. FAD contacts are provided by V294 and G314. I346 is an a quinone binding site. C347 (cysteine persulfide intermediate) is an active-site residue. K382 lines the FAD pocket.

Belongs to the SQRD family. In terms of assembly, homotrimer. FAD serves as cofactor.

The protein localises to the membrane. The catalysed reaction is n a quinone + n hydrogen sulfide + n H(+) = polysulfur(n-2) + n a quinol. Catalyzes the oxidation of hydrogen sulfide, with the help of a quinone. Consecutive reaction cycles lead to the accumulation of a polysulfide product on the active site Cys residues; these products are released when they exceed a critical length, typically as cyclooctasulfur. This is Sulfide-quinone reductase from Aquifex aeolicus (strain VF5).